Reading from the N-terminus, the 82-residue chain is Splicing factor U2AF 35 kDa subunit (82 aa).

A2 is modified (N-acetylalanine). The segment at 12-40 (EKDKVNCSFYFKIGACRHGDRCSRLHNKP) adopts a C3H1-type zinc-finger fold. K39 bears the N6-methyllysine mark. An RRM domain is found at 65-82 (SHCHVSDVEVQEHYDNFF).

Belongs to the splicing factor SR family. As to quaternary structure, identified in the spliceosome C complex. Heterodimer with U2AF2. Interacts (via RS domain) with PHF5A (via N-terminus). Interacts with ZRANB2. Interacts with SDE2. Interacts with SF3B1.

The protein localises to the nucleus. Its subcellular location is the nucleus speckle. In terms of biological role, plays a critical role in both constitutive and enhancer-dependent splicing by mediating protein-protein interactions and protein-RNA interactions required for accurate 3'-splice site selection. Recruits U2 snRNP to the branch point. Directly mediates interactions between U2AF2 and proteins bound to the enhancers and thus may function as a bridge between U2AF2 and the enhancer complex to recruit it to the adjacent intron. The sequence is that of Splicing factor U2AF 35 kDa subunit (U2AF1) from Sus scrofa (Pig).